Reading from the N-terminus, the 235-residue chain is 1-Cys peroxiredoxin (235 aa).

Residues 5–179 (ILLGDKFPDF…ILRVVDSLQL (175 aa)) enclose the Thioredoxin domain. The active site involves C49. C49 acts as the Cysteine sulfenic acid (-SOH) intermediate in catalysis.

It belongs to the peroxiredoxin family. Prx6 subfamily.

The protein localises to the cytoplasm. It carries out the reaction a hydroperoxide + [protein]-dithiol = [protein]-disulfide + an alcohol + H2O. In terms of biological role, thiol-specific peroxidase that catalyzes the reduction of hydrogen peroxide and organic hydroperoxides to water and alcohols, respectively. Plays a role in cell protection against oxidative stress by detoxifying peroxides. This chain is 1-Cys peroxiredoxin, found in Dirofilaria immitis (Canine heartworm).